A 68-amino-acid chain; its full sequence is Large ribosomal subunit protein uL29 (68 aa).

Belongs to the universal ribosomal protein uL29 family.

This chain is Large ribosomal subunit protein uL29, found in Bradyrhizobium sp. (strain BTAi1 / ATCC BAA-1182).